Reading from the N-terminus, the 138-residue chain is Protein FAM136A (138 aa).

A2 carries the N-acetylalanine modification. Phosphothreonine is present on residues T124 and T126.

It belongs to the FAM136 family.

The protein is Protein FAM136A (Fam136a) of Rattus norvegicus (Rat).